The sequence spans 495 residues: Cysteine-rich secretory protein LCCL domain-containing 2 (495 aa).

Positions 1-22 (MSCLLNNMVLMGLALLVCGVQA) are cleaved as a signal peptide. A glycan (N-linked (GlcNAc...) asparagine) is linked at Asn-27. Positions 60–200 (LMLHNKLRGQ…ENAVYLVCNY (141 aa)) constitute an SCP domain. LCCL domains follow at residues 282-377 (MTQV…SSSF) and 383-486 (TETA…QNGN). Intrachain disulfides connect Cys-288–Cys-306, Cys-310–Cys-330, Cys-389–Cys-411, and Cys-415–Cys-438.

As to quaternary structure, binds to heparin, dermatan sulfate and chondroitin sulfate. Present in kidney renal tubules (at protein level).

Its subcellular location is the secreted. Functionally, promotes matrix assembly. In Mus musculus (Mouse), this protein is Cysteine-rich secretory protein LCCL domain-containing 2 (Crispld2).